The chain runs to 185 residues: Ribosome-recycling factor (185 aa).

It belongs to the RRF family.

The protein localises to the cytoplasm. In terms of biological role, responsible for the release of ribosomes from messenger RNA at the termination of protein biosynthesis. May increase the efficiency of translation by recycling ribosomes from one round of translation to another. In Helicobacter hepaticus (strain ATCC 51449 / 3B1), this protein is Ribosome-recycling factor.